Consider the following 320-residue polypeptide: Cytochrome f (320 aa).

Residues 1–35 (MQNRKTFSWVKEQMTRSIYVSIMIYVITRASISNA) form the signal peptide. Residues Tyr36, Cys56, Cys59, and His60 each contribute to the heme site. Residues 286-306 (VQGLLFFLASVILAQIFLVLK) traverse the membrane as a helical segment.

This sequence belongs to the cytochrome f family. The 4 large subunits of the cytochrome b6-f complex are cytochrome b6, subunit IV (17 kDa polypeptide, petD), cytochrome f and the Rieske protein, while the 4 small subunits are PetG, PetL, PetM and PetN. The complex functions as a dimer. It depends on heme as a cofactor.

The protein resides in the plastid. Its subcellular location is the chloroplast thylakoid membrane. Its function is as follows. Component of the cytochrome b6-f complex, which mediates electron transfer between photosystem II (PSII) and photosystem I (PSI), cyclic electron flow around PSI, and state transitions. The chain is Cytochrome f from Phalaenopsis aphrodite subsp. formosana (Moth orchid).